The following is a 286-amino-acid chain: MIIRFDNVSYTYQKGTPYQHQAIHDVNTEFEQGKYYAIVGQTGSGKSTLIQNINALLKPTTGTVTVDDITITHKTKDKYIRPVRKRIGMVFQFPESQLFEDTVEREMIFGPKNFKMNLDEAKNYAHRLLMDLGFSRDVMSQSPFQMSGGQMRKIAIVSILAMNPDIIVVDEPTAGLDPQSKRQVMRLLKSLQTDENKTIILISHDMNEVARYADEVIVMKEGSIVSQTSPKELFKDKEKLADWHIGLPEIVQLQYDFEQKHQTKLKDIALTEEAFVSLYKEWQHEK.

Residues 3–246 (IRFDNVSYTY…KEKLADWHIG (244 aa)) form the ABC transporter domain. 40–47 (GQTGSGKS) is an ATP binding site.

Belongs to the ABC transporter superfamily. Energy-coupling factor EcfA family. Forms a stable energy-coupling factor (ECF) transporter complex composed of 2 membrane-embedded substrate-binding proteins (S component), 2 ATP-binding proteins (A component) and 2 transmembrane proteins (T component).

The protein resides in the cell membrane. Its function is as follows. ATP-binding (A) component of a common energy-coupling factor (ECF) ABC-transporter complex. Unlike classic ABC transporters this ECF transporter provides the energy necessary to transport a number of different substrates. This is Energy-coupling factor transporter ATP-binding protein EcfA2 from Staphylococcus aureus (strain MRSA252).